Here is an 85-residue protein sequence, read N- to C-terminus: Toxin BmKAEP (85 aa).

Residues 1-21 (MKLFLLLVISASMLIDGLVNA) form the signal peptide. Positions 22 to 82 (DGYIRGSNGC…TWKSESNTCG (61 aa)) constitute an LCN-type CS-alpha/beta domain. Disulfide bonds link C31–C81, C35–C56, C42–C63, and C46–C65. G82 carries the glycine amide modification.

Expressed by the venom gland.

Its subcellular location is the secreted. Functionally, shows anti-epileptic activity. Shares high homology with depressant insect toxins, but shows very weak toxicity against mammals and insects and no obvious symptoms on insect larvae. May target voltage-gated sodium channel (Nav). The sequence is that of Toxin BmKAEP from Olivierus martensii (Manchurian scorpion).